A 1088-amino-acid chain; its full sequence is Extended synaptotagmin-1 (1088 aa).

Position 1 is an N-acetylmethionine (Met-1). The Cytoplasmic portion of the chain corresponds to 1–30 (MERSPEEGAGPEPSGQSPATDSTRERDGGS). Residues 1–38 (MERSPEEGAGPEPSGQSPATDSTRERDGGSGVPPAGPG) are disordered. The helical transmembrane segment at 31–51 (GVPPAGPGAASEALAVLTSFG) threads the bilayer. Topologically, residues 52–54 (RRL) are lumenal. The chain crosses the membrane as a helical span at residues 55–75 (LVLVPVYLAGAAGLSVGFVLF). Over 76 to 1088 (GLALYLGWRR…LIDDRDKGGS (1013 aa)) the chain is Cytoplasmic. The region spanning 127 to 305 (DVEKAEWLNK…LPNRLLVPLV (179 aa)) is the SMP-LTD domain. 4 C2 domains span residues 304–425 (LVPD…DNWY), 446–572 (DAEK…QLSS), 618–740 (DAPP…DEWL), and 771–888 (QVNS…ALSG). Ser-316 is modified (phosphoserine; by CDK5). The Ca(2+) site is built by Lys-336, Asp-337, Asp-349, Asp-396, Asp-398, Asp-400, Asp-402, and Asp-403. Residues 599-630 (TEPGAQDWDSESPETGSSVDAPPRPYHTTPNS) are disordered. N6-acetyllysine is present on Lys-806. Ser-809 carries the post-translational modification Phosphoserine. A disordered region spans residues 911 to 930 (HSHSSSSLNEEPEVLGDPTH). Ser-933 and Ser-947 each carry phosphoserine. The 123-residue stretch at 955–1077 (PLGQVKLTVW…DLSQGAAQWY (123 aa)) folds into the C2 5 domain. Tyr-993 carries the phosphotyrosine modification. Residues 1002–1009 (KNRGTKRK) form a required for phosphatidylinositol 4,5-bisphosphate-dependent location at the cell membrane region.

It belongs to the extended synaptotagmin family. In terms of assembly, interacts with ESYT2 and ESYT3. Interacts with ADGRD1; inhibiting the G-protein-coupled receptor activity of ADGRD1. Interaction with ADGRD1 is abolished when cytosolic calcium increases, relieving ADGRD1 G-protein-coupled receptor activity. Interacts (phosphorylated form) with SLC2A4. In terms of processing, phosphorylated on Ser residues in insulin-treated adipocytes (in vitro); this promotes interaction with SLC2A4. Ubiquitously expressed with a higher expression in spleen and white adipose tissue.

The protein localises to the endoplasmic reticulum membrane. It localises to the cell membrane. Functionally, binds calcium (via the C2 domains) and translocates to sites of contact between the endoplasmic reticulum and the cell membrane in response to increased cytosolic calcium levels. Helps tether the endoplasmic reticulum to the cell membrane and promotes the formation of appositions between the endoplasmic reticulum and the cell membrane. Acts as an inhibitor of ADGRD1 G-protein-coupled receptor activity in absence of cytosolic calcium. Binds glycerophospholipids in a barrel-like domain and may play a role in cellular lipid transport. The protein is Extended synaptotagmin-1 (Esyt1) of Rattus norvegicus (Rat).